The chain runs to 1715 residues: Protein PHYLLO, chloroplastic (1715 aa).

Residues 1 to 19 (MRSSFLVSNPPFLPSLIPR) constitute a chloroplast transit peptide. Residues 20-273 (YSSRKSIRRS…EKSIFQVSSH (254 aa)) are inactive isochorismate synthase. The segment at 363–933 (NAVWASAIIE…GTKSELEDAL (571 aa)) is 2-succinyl-5-enolpyruvyl-6-hydroxy-3-cyclohexene-1-carboxylate synthase. Residues 429 to 449 (AVIITSSGTAVSNLLPAVVEA) traverse the membrane as a helical segment. Residues 981 to 1364 (FLHPMIKNVL…SEDVMMNTLG (384 aa)) are O-succinylbenzoate synthase. Catalysis depends on Lys-1170, which acts as the Proton donor; for the o-succinylbenzoate synthase activity. Mg(2+) contacts are provided by Asp-1202, Glu-1228, and Asp-1251. Lys-1279 serves as the catalytic Proton acceptor; for the o-succinylbenzoate synthase activity. Residues 1418–1715 (HFIRVHDVGE…QKLLLALKEM (298 aa)) form a 2-succinyl-6-hydroxy-2,4-cyclohexadiene-1-carboxylate synthase region. In terms of domain architecture, AB hydrolase-1 spans 1435 to 1540 (LFLHGFLGTG…EGAVVVSGSP (106 aa)).

In the N-terminal section; belongs to the isochorismate synthase family. The protein in the 2nd section; belongs to the TPP enzyme family. MenD subfamily. It in the 3rd section; belongs to the mandelate racemase/muconate lactonizing enzyme family. MenC type 1 subfamily. This sequence in the C-terminal section; belongs to the AB hydrolase superfamily. MenH family. The cofactor is Mg(2+). It depends on Mn(2+) as a cofactor. Requires thiamine diphosphate as cofactor.

Its subcellular location is the plastid. The protein localises to the chloroplast membrane. The enzyme catalyses isochorismate + 2-oxoglutarate + H(+) = 5-enolpyruvoyl-6-hydroxy-2-succinyl-cyclohex-3-ene-1-carboxylate + CO2. The catalysed reaction is (1R,6R)-6-hydroxy-2-succinyl-cyclohexa-2,4-diene-1-carboxylate = 2-succinylbenzoate + H2O. It catalyses the reaction 5-enolpyruvoyl-6-hydroxy-2-succinyl-cyclohex-3-ene-1-carboxylate = (1R,6R)-6-hydroxy-2-succinyl-cyclohexa-2,4-diene-1-carboxylate + pyruvate. Its function is as follows. Multifunctional enzyme required for phylloquinone (vitamin K1) biosynthesis. This is Protein PHYLLO, chloroplastic (PHYLLO) from Arabidopsis thaliana (Mouse-ear cress).